A 1160-amino-acid polypeptide reads, in one-letter code: Nonribosomal peptide synthetase fmqC (1160 aa).

An adenylation region spans residues 132–520 (TYRELNDRSS…LGEVEHALQQ (389 aa)). The Carrier domain maps to 642-719 (QPVTQLEESL…EMAGMLDGVT (78 aa)). Serine 679 bears the O-(pantetheine 4'-phosphoryl)serine mark. The tract at residues 749-1025 (CTLEDLQEGF…CAAAETPMRI (277 aa)) is condensation.

It belongs to the NRP synthetase family. Interacts with the mitogen-activated protein kinase mpkA. Phosphorylated by mpkA during conidiogenesis.

It is found in the cytoplasm. It functions in the pathway alkaloid biosynthesis. Functionally, nonribosomal peptide synthetase; part of the gene cluster that mediates the biosynthesis of the antitumor fumiquinazolines that confer a dual-usage capability to defend against phagocytes in the environment and animal hosts. The simplest member is fumiquinazoline F (FQF) with a 6-6-6 tricyclic core derived from anthranilic acid (Ant), tryptophan (Trp), and alanine (Ala). The trimodular NRPS fmqA is responsible for FQF formation. Modules 1, 2 and 3 of fmqA are predicted to activate and load Ant, Trp and Ala, respectively, providing for the assembly of an Ant-Trp-Ala-S-enzyme intermediate that would undergo double cyclization for chain release and generation of the tricyclic 6-6-6 product fumiquinazoline F. The presence of an E domain predicted for module 2 of fmqA is consistent with epimerization of L-Trp to D-Trp during assembly to generate the R-stereocenter at C14 of FQF. The FAD-dependent monooxygenase fmqB and the monomodular NRPS fmqC then maturate FQF to FQA. FmqB oxidizes the 2',3'-double bond of the indole side chain of FQF, and fmqC activates L-Ala as the adenylate, installs it as the pantetheinyl thioester on its carrier protein domain, and acylates the oxidized indole for subsequent intramolecular cyclization to create the 6-5-5-imidazolindolone of FQA. The FAD-linked oxidoreductase fmqD introduces a third layer of scaffold complexity by converting FQA to the spirohemiaminal FQC, presumably by catalyzing the formation of a transient imine within the pyrazinone ring. FQC subsequently converts nonenzymatically to the known cyclic aminal FQD. The polypeptide is Nonribosomal peptide synthetase fmqC (Aspergillus fumigatus (strain ATCC MYA-4609 / CBS 101355 / FGSC A1100 / Af293) (Neosartorya fumigata)).